Reading from the N-terminus, the 514-residue chain is HMG box-containing protein 1 (514 aa).

The disordered stretch occupies residues 150–182 (ARPPPVSSSSKSEPAFPHHHWKEETPVRHERAN). Over residues 170–182 (WKEETPVRHERAN) the composition is skewed to basic and acidic residues. Residues 203-345 (WCNSWPSTVW…PPGHLDAINF (143 aa)) enclose the AXH domain. The segment at residues 434–502 (CKRPMNAFML…EQKRLNPDCW (69 aa)) is a DNA-binding region (HMG box).

In terms of assembly, binds TCF4. Binds RB1. Binds the second PAH repeat of SIN3A. In terms of processing, ubiquitinated by the CTLH E3 ubiquitin-protein ligase complex, leading to subsequent proteasomal degradation.

The protein localises to the nucleus. Functionally, transcriptional repressor that binds to the promoter region of target genes. Plays a role in the regulation of the cell cycle and of the Wnt pathway. Binds preferentially to the sequence 5'-TTCATTCATTCA-3'. Binding to the histone H1.0 promoter is enhanced by interaction with RB1. Disrupts the interaction between DNA and TCF4. The protein is HMG box-containing protein 1 (HBP1) of Pongo abelii (Sumatran orangutan).